Reading from the N-terminus, the 501-residue chain is Acetylcholine receptor subunit beta (501 aa).

Residues 1-23 form the signal peptide; the sequence is MTPGALLMLLGALGAPLAPGVRG. At 24 to 244 the chain is on the extracellular side; that stretch reads SEAEGRLREK…VIFYLIIRRK (221 aa). C151 and C165 are disulfide-bonded. N-linked (GlcNAc...) asparagine glycosylation occurs at N164. 3 helical membrane-spanning segments follow: residues 245-269, 277-295, and 311-332; these read PLFY…VFYL, MGLS…LLLA, and YLMF…VLNL. Topologically, residues 333-469 are cytoplasmic; sequence HHRSPHTHQM…WQFVAMVVDR (137 aa). Y390 carries the phosphotyrosine; by Tyr-kinases modification. Residues 470 to 488 traverse the membrane as a helical segment; it reads LFLWTFIIFTSVGTLVIFL.

The protein belongs to the ligand-gated ion channel (TC 1.A.9) family. Acetylcholine receptor (TC 1.A.9.1) subfamily. Beta-1/CHRNB1 sub-subfamily. Pentamer of two alpha chains, and one each of the beta, delta, and gamma (in immature muscle) or epsilon (in mature muscle) chains. The muscle heteropentamer composed of alpha-1, beta-1, delta, epsilon subunits interacts with the alpha-conotoxin ImII.

It is found in the postsynaptic cell membrane. The protein resides in the cell membrane. The catalysed reaction is K(+)(in) = K(+)(out). The enzyme catalyses Na(+)(in) = Na(+)(out). After binding acetylcholine, the AChR responds by an extensive change in conformation that affects all subunits and leads to opening of an ion-conducting channel across the plasma membrane. This is Acetylcholine receptor subunit beta from Homo sapiens (Human).